A 254-amino-acid polypeptide reads, in one-letter code: Alcohol dehydrogenase (254 aa).

An NAD(+)-binding site is contributed by 10–33 (FVAGLGGIGLDTSRELVKRDLKNL). Serine 138 lines the substrate pocket. Residue tyrosine 151 is the Proton acceptor of the active site.

The protein belongs to the short-chain dehydrogenases/reductases (SDR) family. As to quaternary structure, homodimer.

The catalysed reaction is a primary alcohol + NAD(+) = an aldehyde + NADH + H(+). It carries out the reaction a secondary alcohol + NAD(+) = a ketone + NADH + H(+). This Drosophila guanche (Fruit fly) protein is Alcohol dehydrogenase (Adh).